A 165-amino-acid polypeptide reads, in one-letter code: UPF0763 protein NIS_0363 (165 aa).

The protein belongs to the UPF0763 family.

This Nitratiruptor sp. (strain SB155-2) protein is UPF0763 protein NIS_0363.